A 466-amino-acid chain; its full sequence is Phosphomethylpyrimidine synthase (466 aa).

Substrate is bound by residues Asn-80, Met-109, Tyr-139, His-175, 195-197 (SRG), 236-239 (DSLR), and Glu-275. His-279 provides a ligand contact to Zn(2+). Tyr-302 lines the substrate pocket. His-343 lines the Zn(2+) pocket. 3 residues coordinate [4Fe-4S] cluster: Cys-423, Cys-426, and Cys-431.

This sequence belongs to the ThiC family. It depends on [4Fe-4S] cluster as a cofactor.

It carries out the reaction 5-amino-1-(5-phospho-beta-D-ribosyl)imidazole + S-adenosyl-L-methionine = 4-amino-2-methyl-5-(phosphooxymethyl)pyrimidine + CO + 5'-deoxyadenosine + formate + L-methionine + 3 H(+). It participates in cofactor biosynthesis; thiamine diphosphate biosynthesis. Functionally, catalyzes the synthesis of the hydroxymethylpyrimidine phosphate (HMP-P) moiety of thiamine from aminoimidazole ribotide (AIR) in a radical S-adenosyl-L-methionine (SAM)-dependent reaction. The protein is Phosphomethylpyrimidine synthase of Synechococcus sp. (strain RCC307).